The chain runs to 229 residues: Ribonuclease T (229 aa).

The region spanning valine 23–phenylalanine 197 is the Exonuclease domain. Residues aspartate 26, glutamate 28, histidine 184, and aspartate 189 each contribute to the Mg(2+) site. Histidine 184 serves as the catalytic Proton donor/acceptor.

This sequence belongs to the RNase T family. As to quaternary structure, homodimer. Mg(2+) serves as cofactor.

In terms of biological role, trims short 3' overhangs of a variety of RNA species, leaving a one or two nucleotide 3' overhang. Responsible for the end-turnover of tRNA: specifically removes the terminal AMP residue from uncharged tRNA (tRNA-C-C-A). Also appears to be involved in tRNA biosynthesis. This Haemophilus influenzae (strain PittEE) protein is Ribonuclease T.